The sequence spans 29 residues: Cyclotide mobo-B (29 aa).

Residues 1-29 constitute a cross-link (cyclopeptide (Gly-Asn)); sequence GKPICGETCAKGKCYTPKCTCNWPICYKN. 3 cysteine pairs are disulfide-bonded: C5–C19, C9–C21, and C14–C26.

This sequence belongs to the cyclotide family. This is a cyclic peptide.

Its function is as follows. Probably participates in a plant defense mechanism. This Melicytus obovatus (Hymenanthera obovata) protein is Cyclotide mobo-B.